Reading from the N-terminus, the 694-residue chain is MESKRLDNAALAAGISPNYINAHGKPQSISAETKRRLLDAMHQRTATKVAVTPVPNVMVYTSGKKMPMVVEGSGEYSWLLTTEEGTQYKGHVTGGKAFNLPTKLPEGYHTLTLTQDDQRAHCRVIVAPKRCYEPQALLNKQKLWGACVQLYTLRSEKNWGIGDFGDLKAMLVDVAKRGGSFIGLNPIHALYPANPESASPYSPSSRRWLNVIYIDVNAVEDFHLSEEAQAWWQLPTTQQTLQQARDADWVDYSTVTALKMTALRMAWKGFAQRDDEQMAAFRQFVAEQGDSLFWQAAFDALHAQQVKEDEMRWGWPAWPEMYQNVDSPEVRQFCEEHRDDVDFYLWLQWLAYSQFAACWEISQGYEMPIGLYRDLAVGVAEGGAETWCDRELYCLKASVGAPPDILGPLGQNWGLPPMDPHIITARAYEPFIELLRANMQNCGALRIDHVMSMLRLWWIPYGETADQGAYVHYPVDDLLSILALESKRHRCMVIGEDLGTVPVEIVGKLRSSGVYSYKVLYFENDHEKTFRAPKAYPEQSMAVAATHDLPTLRGYWECGDLTLGKTLGLYPDEVVLRGLYQDRELAKQGLLDALHKYGCLPKRAGHKASLMSMTPTLNRGLQRYIADSNSALLGLQPEDWLDMAEPVNIPGTSYQYKNWRRKLSATLESMFADDGVNKLLKDLDRRRRAAAKKK.

This sequence belongs to the disproportionating enzyme family.

The protein resides in the cytoplasm. The catalysed reaction is Transfers a segment of a (1-&gt;4)-alpha-D-glucan to a new position in an acceptor, which may be glucose or a (1-&gt;4)-alpha-D-glucan.. This chain is 4-alpha-glucanotransferase (malQ), found in Escherichia coli (strain K12).